The primary structure comprises 182 residues: Heat shock protein beta-2 (182 aa).

Residues 55-163 (RAGEGGRAGA…DTEVNEVYIS (109 aa)) enclose the sHSP domain.

This sequence belongs to the small heat shock protein (HSP20) family. Interacts with DMPK; may enhance its kinase activity.

The protein localises to the cytoplasm. It is found in the nucleus. Its function is as follows. May regulate the kinase DMPK. This is Heat shock protein beta-2 (Hspb2) from Rattus norvegicus (Rat).